Reading from the N-terminus, the 775-residue chain is Semaphorin-3E (775 aa).

A signal peptide spans 1–25 (MAPAGHILTLLLWGHLLELWTPGHS). The 485-residue stretch at 32 to 516 (RLRLSHKELL…SASAVAQVRF (485 aa)) folds into the Sema domain. Asn44 carries N-linked (GlcNAc...) asparagine glycosylation. Cys105 and Cys115 form a disulfide bridge. The N-linked (GlcNAc...) asparagine glycan is linked to Asn126. Cys133 and Cys142 form a disulfide bridge. Residues Asn175 and Asn330 are each glycosylated (N-linked (GlcNAc...) asparagine). 3 disulfides stabilise this stretch: Cys270–Cys382, Cys294–Cys342, and Cys519–Cys537. The Ig-like C2-type domain occupies 581-669 (ALDRTEERLA…NFVHTVRKIT (89 aa)). Asn596 carries an N-linked (GlcNAc...) asparagine glycan. A disulfide bridge links Cys654 with Cys729.

The protein belongs to the semaphorin family. Interacts with PLXND1. In terms of tissue distribution, detected in neurons in the thalamus. Detected in embryonic vasculature. Developing lungs, developing skeletal elements and ventral horns of the developing neural tube. Correlates positively with tumor progression.

It localises to the secreted. Plays an important role in signaling via the cell surface receptor PLXND1. Mediates reorganization of the actin cytoskeleton, leading to the retraction of cell projections. Promotes focal adhesion disassembly and inhibits adhesion of endothelial cells to the extracellular matrix. Regulates angiogenesis, both during embryogenesis and after birth. Can down-regulate sprouting angiogenesis. Required for normal vascular patterning during embryogenesis. Plays an important role in ensuring the specificity of synapse formation. This chain is Semaphorin-3E (Sema3e), found in Mus musculus (Mouse).